The chain runs to 347 residues: Selenide, water dikinase 2 (347 aa).

The active site involves Sec-18. A non-standard amino acid (selenocysteine) is located at residue Sec-18. ATP is bound by residues Lys-21 and 48 to 50 (TSD). Asp-51 is a binding site for Mg(2+). ATP is bound by residues Asp-68, Asp-91, and 138–140 (GHT). Residue Asp-91 participates in Mg(2+) binding. Residue Asp-226 participates in Mg(2+) binding.

Belongs to the selenophosphate synthase 1 family. Class I subfamily. In terms of assembly, homodimer. Mg(2+) is required as a cofactor.

The enzyme catalyses hydrogenselenide + ATP + H2O = selenophosphate + AMP + phosphate + 2 H(+). Its function is as follows. Synthesizes selenophosphate from selenide and ATP. In Peptoclostridium acidaminophilum (Eubacterium acidaminophilum), this protein is Selenide, water dikinase 2.